A 274-amino-acid chain; its full sequence is MSLVSISEGVRAGLVLKRHVVCFTGTSNDQGLKSISDLLSHMDNPAVPSPQSCSIDSLPDTETQNGISCYLVPYSGTAEIDYELQNRFALWLHKSTVPVILVLQDNPLMIPYLRHQFWFACGEDMGQWQDSVVAESIVDSVYMHHSIRRYILDLIVHLRMHRLSKPSQGGGAHSRSLSDMTLLCKWIALTSGSSFITPDMVQTACERYFPWHLQLIESSKEDPSVMYGSQEELVDELINRFDTFAIKMAQEYKNPLFKQLCIVQSVMKDIIPAT.

It belongs to the MTC2 family.

In terms of biological role, may be involved in telomere capping. The sequence is that of Maintenance of telomere capping protein 2 (MTC2) from Kluyveromyces lactis (strain ATCC 8585 / CBS 2359 / DSM 70799 / NBRC 1267 / NRRL Y-1140 / WM37) (Yeast).